Here is a 164-residue protein sequence, read N- to C-terminus: Crossover junction endodeoxyribonuclease RuvC (164 aa).

Active-site residues include Asp-7, Glu-67, and Asp-139. 3 residues coordinate Mg(2+): Asp-7, Glu-67, and Asp-139.

The protein belongs to the RuvC family. As to quaternary structure, homodimer which binds Holliday junction (HJ) DNA. The HJ becomes 2-fold symmetrical on binding to RuvC with unstacked arms; it has a different conformation from HJ DNA in complex with RuvA. In the full resolvosome a probable DNA-RuvA(4)-RuvB(12)-RuvC(2) complex forms which resolves the HJ. The cofactor is Mg(2+).

It localises to the cytoplasm. It carries out the reaction Endonucleolytic cleavage at a junction such as a reciprocal single-stranded crossover between two homologous DNA duplexes (Holliday junction).. The RuvA-RuvB-RuvC complex processes Holliday junction (HJ) DNA during genetic recombination and DNA repair. Endonuclease that resolves HJ intermediates. Cleaves cruciform DNA by making single-stranded nicks across the HJ at symmetrical positions within the homologous arms, yielding a 5'-phosphate and a 3'-hydroxyl group; requires a central core of homology in the junction. The consensus cleavage sequence is 5'-(A/T)TT(C/G)-3'. Cleavage occurs on the 3'-side of the TT dinucleotide at the point of strand exchange. HJ branch migration catalyzed by RuvA-RuvB allows RuvC to scan DNA until it finds its consensus sequence, where it cleaves and resolves the cruciform DNA. The chain is Crossover junction endodeoxyribonuclease RuvC from Geobacter metallireducens (strain ATCC 53774 / DSM 7210 / GS-15).